The primary structure comprises 625 residues: Mesothelin (625 aa).

Positions 1–35 are cleaved as a signal peptide; it reads MALPTAQPLLGSCGSPICSRSFLLLLLSLGWLPLL. Serine 202 is subject to Phosphoserine. The cysteines at positions 304 and 328 are disulfide-linked. Asparagine 390, asparagine 488, and asparagine 517 each carry an N-linked (GlcNAc...) asparagine glycan. Serine 600 carries GPI-anchor amidated serine lipidation. The propeptide at 601–625 is removed in mature form; sequence SGAPLLGPGFVFAWIPALLSALRLS.

Belongs to the mesothelin family. In terms of assembly, interacts with MUC16. Proteolytically cleaved by a furin-like convertase to generate megakaryocyte-potentiating factor (MPF), and the cleaved form of mesothelin. In terms of tissue distribution, specifically expressed in lung. Overexpressed in hereditary renal carcinoma developed by Eker rats.

Its subcellular location is the cell membrane. The protein resides in the golgi apparatus. It localises to the secreted. Its function is as follows. Membrane-anchored forms may play a role in cellular adhesion. Megakaryocyte-potentiating factor (MPF) may potentiate megakaryocyte colony formation. This is Mesothelin (Msln) from Rattus norvegicus (Rat).